The chain runs to 308 residues: Ribosomal RNA small subunit methyltransferase A (308 aa).

Residues asparagine 35, valine 37, glycine 62, glutamate 83, aspartate 113, and asparagine 136 each contribute to the S-adenosyl-L-methionine site.

Belongs to the class I-like SAM-binding methyltransferase superfamily. rRNA adenine N(6)-methyltransferase family. RsmA subfamily.

The protein resides in the cytoplasm. The enzyme catalyses adenosine(1518)/adenosine(1519) in 16S rRNA + 4 S-adenosyl-L-methionine = N(6)-dimethyladenosine(1518)/N(6)-dimethyladenosine(1519) in 16S rRNA + 4 S-adenosyl-L-homocysteine + 4 H(+). Its function is as follows. Specifically dimethylates two adjacent adenosines (A1518 and A1519) in the loop of a conserved hairpin near the 3'-end of 16S rRNA in the 30S particle. May play a critical role in biogenesis of 30S subunits. This Bifidobacterium longum (strain NCC 2705) protein is Ribosomal RNA small subunit methyltransferase A.